Here is a 435-residue protein sequence, read N- to C-terminus: Xylose isomerase (435 aa).

Catalysis depends on residues His99 and Asp102. Mg(2+)-binding residues include Glu230, Glu266, His269, Asp294, Asp305, Asp307, and Asp337.

The protein belongs to the xylose isomerase family. Homotetramer. Mg(2+) is required as a cofactor.

The protein localises to the cytoplasm. The catalysed reaction is alpha-D-xylose = alpha-D-xylulofuranose. This is Xylose isomerase from Enterococcus faecalis (strain ATCC 700802 / V583).